The primary structure comprises 600 residues: Elongation factor 4 (600 aa).

The region spanning 5-187 (KYIRNFSIIA…AIVNKLPPPK (183 aa)) is the tr-type G domain. GTP is bound by residues 17–22 (DHGKST) and 134–137 (NKID).

The protein belongs to the TRAFAC class translation factor GTPase superfamily. Classic translation factor GTPase family. LepA subfamily.

It localises to the cell inner membrane. It carries out the reaction GTP + H2O = GDP + phosphate + H(+). In terms of biological role, required for accurate and efficient protein synthesis under certain stress conditions. May act as a fidelity factor of the translation reaction, by catalyzing a one-codon backward translocation of tRNAs on improperly translocated ribosomes. Back-translocation proceeds from a post-translocation (POST) complex to a pre-translocation (PRE) complex, thus giving elongation factor G a second chance to translocate the tRNAs correctly. Binds to ribosomes in a GTP-dependent manner. The chain is Elongation factor 4 from Rickettsia canadensis (strain McKiel).